We begin with the raw amino-acid sequence, 146 residues long: Large ribosomal subunit protein uL15 (146 aa).

Positions 1–18 are enriched in basic and acidic residues; sequence MKLHELKPTPGSRHERNR. The segment at 1–69 is disordered; that stretch reads MKLHELKPTP…RLPKRGFNNP (69 aa). The segment covering 42–52 has biased composition (gly residues); it reads SGGGVRPGFEG.

This sequence belongs to the universal ribosomal protein uL15 family. Part of the 50S ribosomal subunit.

Binds to the 23S rRNA. The protein is Large ribosomal subunit protein uL15 of Exiguobacterium sp. (strain ATCC BAA-1283 / AT1b).